The primary structure comprises 112 residues: Large ribosomal subunit protein bL21 (112 aa).

The protein belongs to the bacterial ribosomal protein bL21 family. In terms of assembly, part of the 50S ribosomal subunit. Contacts protein L20.

Its function is as follows. This protein binds to 23S rRNA in the presence of protein L20. This is Large ribosomal subunit protein bL21 from Buchnera aphidicola subsp. Baizongia pistaciae (strain Bp).